Reading from the N-terminus, the 92-residue chain is Large ribosomal subunit protein eL43z (92 aa).

The C4-type zinc finger occupies 39–60 (CEFCGKYSVKRKVVGIWGCKDC).

This sequence belongs to the eukaryotic ribosomal protein eL43 family.

The sequence is that of Large ribosomal subunit protein eL43z (RPL37AB) from Arabidopsis thaliana (Mouse-ear cress).